A 209-amino-acid chain; its full sequence is uncharacterized protein (209 aa).

Its function is as follows. May influence the expression of the nuc gene. This is an uncharacterized protein from Shigella flexneri.